A 760-amino-acid polypeptide reads, in one-letter code: Xaa-Pro dipeptidyl-peptidase (760 aa).

Catalysis depends on charge relay system residues Ser349, Asp469, and His499.

Belongs to the peptidase S15 family. In terms of assembly, homodimer.

It localises to the cytoplasm. It catalyses the reaction Hydrolyzes Xaa-Pro-|- bonds to release unblocked, N-terminal dipeptides from substrates including Ala-Pro-|-p-nitroanilide and (sequentially) Tyr-Pro-|-Phe-Pro-|-Gly-Pro-|-Ile.. In terms of biological role, removes N-terminal dipeptides sequentially from polypeptides having unsubstituted N-termini provided that the penultimate residue is proline. The polypeptide is Xaa-Pro dipeptidyl-peptidase (Streptococcus pyogenes serotype M4 (strain MGAS10750)).